The sequence spans 296 residues: Protoheme IX farnesyltransferase (296 aa).

9 helical membrane-spanning segments follow: residues 27 to 47 (IMYL…GTIH), 48 to 68 (PLIG…AGAL), 98 to 118 (ALEC…LTVN), 120 to 140 (VSAI…TMVL), 148 to 168 (IVIG…SVTG), 175 to 195 (LLLF…LSLL), 219 to 239 (HIMG…LYVA), 242 to 262 (VLYE…AYCL), and 274 to 294 (CMGL…AIAL).

It belongs to the UbiA prenyltransferase family. Protoheme IX farnesyltransferase subfamily.

It localises to the cell inner membrane. It catalyses the reaction heme b + (2E,6E)-farnesyl diphosphate + H2O = Fe(II)-heme o + diphosphate. The protein operates within porphyrin-containing compound metabolism; heme O biosynthesis; heme O from protoheme: step 1/1. In terms of biological role, converts heme B (protoheme IX) to heme O by substitution of the vinyl group on carbon 2 of heme B porphyrin ring with a hydroxyethyl farnesyl side group. The sequence is that of Protoheme IX farnesyltransferase from Anaplasma phagocytophilum (strain HZ).